A 101-amino-acid chain; its full sequence is Ferredoxin Fdx2 (101 aa).

4Fe-4S ferredoxin-type domains follow at residues 1-29 (MATYITEDCINCGACEPECPNEAISEGDE) and 31-64 (YVIDPELCTECVGFYDHEACQAVCPVECCLPNPQ). [4Fe-4S] cluster contacts are provided by C9, C12, C15, C19, C38, C41, C50, and C54.

[4Fe-4S] cluster serves as cofactor.

Ferredoxins are iron-sulfur proteins that transfer electrons in a wide variety of metabolic reactions. Fdx2 can receive electrons from both FdR_A and FdR_B ferredoxin reductases, with a preference for FdR_B compared with FdR_A, and transfer the electrons to the cytochrome P450 CYP260A1. The chain is Ferredoxin Fdx2 from Sorangium cellulosum (strain So ce56) (Polyangium cellulosum (strain So ce56)).